Consider the following 531-residue polypeptide: UDP-glucuronosyltransferase 2B13 (531 aa).

Residues 1–24 (MPVKCISVLLLLLQLSCCFSSGSC) form the signal peptide. 3 N-linked (GlcNAc...) asparagine glycosylation sites follow: Asn69, Asn101, and Asn317. Residues 495–511 (VIGFLLACVAITTYLIV) traverse the membrane as a helical segment.

This sequence belongs to the UDP-glycosyltransferase family.

It is found in the microsome membrane. The protein resides in the endoplasmic reticulum membrane. The catalysed reaction is glucuronate acceptor + UDP-alpha-D-glucuronate = acceptor beta-D-glucuronoside + UDP + H(+). Its function is as follows. UDPGT is of major importance in the conjugation and subsequent elimination of potentially toxic xenobiotics and endogenous compounds. Acts on small phenolic agents such as 2-beta-naphthol and 4-methylumbelliferone as well as bulky phenolic compounds like 2-hydroxy- and 4-hydroxybiphenyl. In contrast to 2B16 it is active toward octylgallate. The chain is UDP-glucuronosyltransferase 2B13 (UGT2B13) from Oryctolagus cuniculus (Rabbit).